We begin with the raw amino-acid sequence, 374 residues long: Isopentenyl-diphosphate delta-isomerase (374 aa).

13-14 (RK) is a substrate binding site. Residues 71–73 (GMT), S104, and N132 each bind FMN. Residue 104–106 (SQR) participates in substrate binding. Position 171 (Q171) interacts with substrate. E172 is a binding site for Mg(2+). FMN is bound by residues K203, T233, 282-284 (GMR), and 303-304 (AL).

The protein belongs to the IPP isomerase type 2 family. In terms of assembly, homooctamer. Dimer of tetramers. The cofactor is FMN. Requires NADPH as cofactor. Mg(2+) serves as cofactor.

The protein localises to the cytoplasm. The enzyme catalyses isopentenyl diphosphate = dimethylallyl diphosphate. Involved in the biosynthesis of isoprenoids. Catalyzes the 1,3-allylic rearrangement of the homoallylic substrate isopentenyl (IPP) to its allylic isomer, dimethylallyl diphosphate (DMAPP). This Thermococcus onnurineus (strain NA1) protein is Isopentenyl-diphosphate delta-isomerase.